Consider the following 578-residue polypeptide: Arginine--tRNA ligase (578 aa).

Positions 123-133 (PNLAKEMHVGH) match the 'HIGH' region motif.

The protein belongs to the class-I aminoacyl-tRNA synthetase family. In terms of assembly, monomer.

The protein localises to the cytoplasm. The enzyme catalyses tRNA(Arg) + L-arginine + ATP = L-arginyl-tRNA(Arg) + AMP + diphosphate. The protein is Arginine--tRNA ligase of Hahella chejuensis (strain KCTC 2396).